Consider the following 219-residue polypeptide: Pyridoxine/pyridoxamine 5'-phosphate oxidase (219 aa).

Residues 15 to 18 and lysine 73 contribute to the substrate site; that span reads RRDY. Residues 68-73, 83-84, arginine 89, lysine 90, and glutamine 112 each bind FMN; these read RMVLLK and YT. Positions 130, 134, and 138 each coordinate substrate. Residues 147-148 and tryptophan 192 contribute to the FMN site; that span reads QS. Residue 198-200 coordinates substrate; sequence RLH. Position 202 (arginine 202) interacts with FMN.

It belongs to the pyridoxamine 5'-phosphate oxidase family. Homodimer. FMN is required as a cofactor.

It carries out the reaction pyridoxamine 5'-phosphate + O2 + H2O = pyridoxal 5'-phosphate + H2O2 + NH4(+). The catalysed reaction is pyridoxine 5'-phosphate + O2 = pyridoxal 5'-phosphate + H2O2. It participates in cofactor metabolism; pyridoxal 5'-phosphate salvage; pyridoxal 5'-phosphate from pyridoxamine 5'-phosphate: step 1/1. The protein operates within cofactor metabolism; pyridoxal 5'-phosphate salvage; pyridoxal 5'-phosphate from pyridoxine 5'-phosphate: step 1/1. Catalyzes the oxidation of either pyridoxine 5'-phosphate (PNP) or pyridoxamine 5'-phosphate (PMP) into pyridoxal 5'-phosphate (PLP). This Acaryochloris marina (strain MBIC 11017) protein is Pyridoxine/pyridoxamine 5'-phosphate oxidase.